Here is a 623-residue protein sequence, read N- to C-terminus: (-)-alpha-pinene synthase 1, chloroplastic (623 aa).

The N-terminal 52 residues, 1–52 (MDLISVLPSASKSCVCLHKPLSSSTHKLKPFCKTIRILGMPRRWKFAGPSMS), are a transit peptide targeting the chloroplast. Mg(2+) contacts are provided by Asp-374, Asp-378, and Asp-526. The DDXXD motif motif lies at 374 to 378 (DDMYD).

The protein belongs to the terpene synthase family. Tpsd subfamily. Mg(2+) is required as a cofactor. Mn(2+) serves as cofactor.

It localises to the plastid. It is found in the chloroplast. It catalyses the reaction (2E)-geranyl diphosphate = (1S,5S)-alpha-pinene + diphosphate. The enzyme catalyses (2E)-geranyl diphosphate = (1S,5S)-beta-pinene + diphosphate. It carries out the reaction (2E)-geranyl diphosphate = (-)-beta-phellandrene + diphosphate. It functions in the pathway terpene metabolism; oleoresin biosynthesis. Its pathway is secondary metabolite biosynthesis; terpenoid biosynthesis. In terms of biological role, monoterpene synthase (TPS) involved in the biosynthesis of monoterpene natural products included in conifer oleoresin secretions and volatile emissions; these compounds contribute to biotic and abiotic stress defense against herbivores and pathogens. Catalyzes the conversion of (2E)-geranyl diphosphate (GPP) to (-)-alpha-pinene and (-)-beta-pinene, and, to a lower extent, to (-)-beta-phellandrene. The protein is (-)-alpha-pinene synthase 1, chloroplastic of Pinus banksiana (Jack pine).